Consider the following 149-residue polypeptide: NPC intracellular cholesterol transporter 2 (149 aa).

The signal sequence occupies residues 1–19; it reads MRFLTVAFLFLALSASALA. Cystine bridges form between C27-C140, C42-C47, and C93-C99. An N-linked (GlcNAc...) asparagine glycan is attached at N58. K116 bears the N6-acetyllysine mark.

This sequence belongs to the NPC2 family. As to quaternary structure, interacts with NPC1 (via the second lumenal domain) in a cholestrol-dependent manner. Interacts with NUS1/NgBR, the interaction stabilizes NCP2 and regulates cholesterol trafficking. Interacts with DHDDS. Interacts with NEDD4L (via C2 domain). Interacts with NPC1L1. Expressed in kidney, spleen, liver and mammary gland, but not in testis.

Its subcellular location is the secreted. It localises to the endoplasmic reticulum. The protein resides in the lysosome. The catalysed reaction is cholesterol(in) = cholesterol(out). Functionally, intracellular cholesterol transporter which acts in concert with NPC1 and plays an important role in the egress of cholesterol from the lysosomal compartment. Unesterified cholesterol that has been released from LDLs in the lumen of the late endosomes/lysosomes is transferred by NPC2 to the cholesterol-binding pocket in the N-terminal domain of NPC1. May bind and mobilize cholesterol that is associated with membranes. NPC2 binds cholesterol with a 1:1 stoichiometry. Can bind a variety of sterols, including lathosterol, desmosterol and the plant sterols stigmasterol and beta-sitosterol. The secreted form of NCP2 regulates biliary cholesterol secretion via stimulation of ABCG5/ABCG8-mediated cholesterol transport. This chain is NPC intracellular cholesterol transporter 2, found in Bos taurus (Bovine).